Here is a 284-residue protein sequence, read N- to C-terminus: 4-hydroxy-3-methylbut-2-enyl diphosphate reductase (284 aa).

Position 12 (C12) interacts with [4Fe-4S] cluster. The (2E)-4-hydroxy-3-methylbut-2-enyl diphosphate site is built by H40 and H72. The dimethylallyl diphosphate site is built by H40 and H72. Isopentenyl diphosphate is bound by residues H40 and H72. Residue C94 coordinates [4Fe-4S] cluster. H122 lines the (2E)-4-hydroxy-3-methylbut-2-enyl diphosphate pocket. Dimethylallyl diphosphate is bound at residue H122. H122 is an isopentenyl diphosphate binding site. The Proton donor role is filled by E124. T161 is a (2E)-4-hydroxy-3-methylbut-2-enyl diphosphate binding site. C193 serves as a coordination point for [4Fe-4S] cluster. The (2E)-4-hydroxy-3-methylbut-2-enyl diphosphate site is built by S221, N223, and S264. The dimethylallyl diphosphate site is built by S221, N223, and S264. Positions 221, 223, and 264 each coordinate isopentenyl diphosphate.

The protein belongs to the IspH family. It depends on [4Fe-4S] cluster as a cofactor.

The catalysed reaction is isopentenyl diphosphate + 2 oxidized [2Fe-2S]-[ferredoxin] + H2O = (2E)-4-hydroxy-3-methylbut-2-enyl diphosphate + 2 reduced [2Fe-2S]-[ferredoxin] + 2 H(+). The enzyme catalyses dimethylallyl diphosphate + 2 oxidized [2Fe-2S]-[ferredoxin] + H2O = (2E)-4-hydroxy-3-methylbut-2-enyl diphosphate + 2 reduced [2Fe-2S]-[ferredoxin] + 2 H(+). It functions in the pathway isoprenoid biosynthesis; dimethylallyl diphosphate biosynthesis; dimethylallyl diphosphate from (2E)-4-hydroxy-3-methylbutenyl diphosphate: step 1/1. It participates in isoprenoid biosynthesis; isopentenyl diphosphate biosynthesis via DXP pathway; isopentenyl diphosphate from 1-deoxy-D-xylulose 5-phosphate: step 6/6. Its function is as follows. Catalyzes the conversion of 1-hydroxy-2-methyl-2-(E)-butenyl 4-diphosphate (HMBPP) into a mixture of isopentenyl diphosphate (IPP) and dimethylallyl diphosphate (DMAPP). Acts in the terminal step of the DOXP/MEP pathway for isoprenoid precursor biosynthesis. The chain is 4-hydroxy-3-methylbut-2-enyl diphosphate reductase from Dehalococcoides mccartyi (strain ATCC BAA-2100 / JCM 16839 / KCTC 5957 / BAV1).